The chain runs to 122 residues: Large ribosomal subunit protein uL14c (122 aa).

Belongs to the universal ribosomal protein uL14 family. Part of the 50S ribosomal subunit.

The protein localises to the plastid. It is found in the chloroplast. Its function is as follows. Binds to 23S rRNA. The chain is Large ribosomal subunit protein uL14c from Fagopyrum esculentum subsp. ancestrale (Wild buckwheat).